Here is a 397-residue protein sequence, read N- to C-terminus: Tryptophan synthase beta chain (397 aa).

Lys-91 carries the post-translational modification N6-(pyridoxal phosphate)lysine.

Belongs to the TrpB family. In terms of assembly, tetramer of two alpha and two beta chains. Pyridoxal 5'-phosphate is required as a cofactor.

The catalysed reaction is (1S,2R)-1-C-(indol-3-yl)glycerol 3-phosphate + L-serine = D-glyceraldehyde 3-phosphate + L-tryptophan + H2O. It participates in amino-acid biosynthesis; L-tryptophan biosynthesis; L-tryptophan from chorismate: step 5/5. The beta subunit is responsible for the synthesis of L-tryptophan from indole and L-serine. The polypeptide is Tryptophan synthase beta chain (Bacillus anthracis (strain A0248)).